The sequence spans 174 residues: Superoxide dismutase [Cu-Zn] (174 aa).

An N-terminal signal peptide occupies residues 1–20 (MMKSLFIASTMVLMAFPAFA). Cu cation-binding residues include His68, His70, and His93. A disulfide bridge links Cys75 with Cys170. Zn(2+) contacts are provided by His93, His102, His110, and Asp113. A Cu cation-binding site is contributed by His148.

It belongs to the Cu-Zn superoxide dismutase family. In terms of assembly, homodimer. It depends on Cu cation as a cofactor. Zn(2+) serves as cofactor.

Its subcellular location is the periplasm. It catalyses the reaction 2 superoxide + 2 H(+) = H2O2 + O2. Destroys radicals which are normally produced within the cells and which are toxic to biological systems. This Brucella melitensis biotype 1 (strain ATCC 23456 / CCUG 17765 / NCTC 10094 / 16M) protein is Superoxide dismutase [Cu-Zn] (sodC).